Consider the following 168-residue polypeptide: MRIQLLWLSFAVLSTILSTCDATSDKLDPQRVQPNQNGSGHNQSIRSALKTSHGKTIADDEERFISLSGMSEKIAKYYKAIVAKLSKYFRDYHERREIRKQRILNKSFAEMMAGQKSVEDIGRNQDASFMSSSFLWTPEAFKSILHKYALFLYKYGNGHLATVPVKTG.

The signal sequence occupies residues 1–22 (MRIQLLWLSFAVLSTILSTCDA). A disordered region spans residues 25 to 52 (DKLDPQRVQPNQNGSGHNQSIRSALKTS). The segment covering 32-50 (VQPNQNGSGHNQSIRSALK) has biased composition (polar residues). N-linked (GlcNAc...) asparagine glycans are attached at residues Asn-37 and Asn-42. The RxLR-dEER motif lies at 46 to 63 (RSALKTSHGKTIADDEER). One can recognise an IQ domain in the interval 78 to 107 (YKAIVAKLSKYFRDYHERREIRKQRILNKS). N-linked (GlcNAc...) asparagine glycosylation occurs at Asn-105.

Belongs to the RxLR effector family.

The protein resides in the secreted. It localises to the host Golgi apparatus. Its function is as follows. Secreted effector that suppresses pattern-triggered immunity (PTI) in plant host. The sequence is that of Secreted RxLR effector protein RXLR-C06 from Plasmopara halstedii (Downy mildew of sunflower).